Consider the following 459-residue polypeptide: Argininosuccinate lyase (459 aa).

The protein belongs to the lyase 1 family. Argininosuccinate lyase subfamily.

It is found in the cytoplasm. It carries out the reaction 2-(N(omega)-L-arginino)succinate = fumarate + L-arginine. Its pathway is amino-acid biosynthesis; L-arginine biosynthesis; L-arginine from L-ornithine and carbamoyl phosphate: step 3/3. This chain is Argininosuccinate lyase, found in Bacillus licheniformis (strain ATCC 14580 / DSM 13 / JCM 2505 / CCUG 7422 / NBRC 12200 / NCIMB 9375 / NCTC 10341 / NRRL NRS-1264 / Gibson 46).